A 500-amino-acid chain; its full sequence is Lycopene beta cyclase, chloroplastic (500 aa).

Residues 1–81 (MDTLLKTPNK…ELPMYDPSKG (81 aa)) constitute a chloroplast transit peptide. Residue 86–114 (LAVVGGGPAGLAVAQQVSEAGLSVVSIDP) participates in NAD(+) binding.

Belongs to the lycopene cyclase family.

The protein localises to the plastid. It localises to the chloroplast. It carries out the reaction a carotenoid psi-end group = a carotenoid beta-end derivative. Its pathway is carotenoid biosynthesis; beta-carotene biosynthesis. It functions in the pathway carotenoid biosynthesis; beta-zeacarotene biosynthesis. Catalyzes the double cyclization reaction which converts lycopene to beta-carotene and neurosporene to beta-zeacarotene. This Nicotiana tabacum (Common tobacco) protein is Lycopene beta cyclase, chloroplastic (LCY1).